Consider the following 432-residue polypeptide: Adenylosuccinate synthetase (432 aa).

GTP is bound by residues 11–17 (GDEGKGK) and 39–41 (GHT). Catalysis depends on Asp-12, which acts as the Proton acceptor. Asp-12 and Gly-39 together coordinate Mg(2+). IMP contacts are provided by residues 12–15 (DEGK), 37–40 (NAGH), Thr-134, Arg-148, Asn-230, Thr-245, and Arg-309. His-40 serves as the catalytic Proton donor. Position 305-311 (305-311 (VTTGRKR)) interacts with substrate. Residues Arg-311, 337 to 339 (KLD), and 419 to 421 (GTG) each bind GTP.

The protein belongs to the adenylosuccinate synthetase family. In terms of assembly, homodimer. Mg(2+) is required as a cofactor.

It localises to the cytoplasm. The catalysed reaction is IMP + L-aspartate + GTP = N(6)-(1,2-dicarboxyethyl)-AMP + GDP + phosphate + 2 H(+). It participates in purine metabolism; AMP biosynthesis via de novo pathway; AMP from IMP: step 1/2. Its function is as follows. Plays an important role in the de novo pathway and in the salvage pathway of purine nucleotide biosynthesis. Catalyzes the first committed step in the biosynthesis of AMP from IMP. In Candida glabrata (strain ATCC 2001 / BCRC 20586 / JCM 3761 / NBRC 0622 / NRRL Y-65 / CBS 138) (Yeast), this protein is Adenylosuccinate synthetase.